The chain runs to 346 residues: L-glyceraldehyde 3-phosphate reductase (346 aa).

NADP(+)-binding residues include tryptophan 33, aspartate 61, tyrosine 66, serine 168, glutamine 193, threonine 223, leucine 225, glutamine 227, lysine 233, serine 303, glutamine 307, and asparagine 311.

This sequence belongs to the shaker potassium channel beta subunit family.

It catalyses the reaction a primary alcohol + NADP(+) = an aldehyde + NADPH + H(+). In terms of biological role, aldo-keto reductase that catalyzes the stereospecific, NADPH-dependent reduction of L-glyceraldehyde 3-phosphate (L-GAP) to L-glycerol 3-phosphate (L-G3P). In Escherichia coli O157:H7, this protein is L-glyceraldehyde 3-phosphate reductase.